The chain runs to 138 residues: ATP synthase epsilon chain, chloroplastic (138 aa).

Belongs to the ATPase epsilon chain family. As to quaternary structure, F-type ATPases have 2 components, CF(1) - the catalytic core - and CF(0) - the membrane proton channel. CF(1) has five subunits: alpha(3), beta(3), gamma(1), delta(1), epsilon(1). CF(0) has three main subunits: a, b and c.

It localises to the plastid. The protein localises to the chloroplast thylakoid membrane. Functionally, produces ATP from ADP in the presence of a proton gradient across the membrane. The sequence is that of ATP synthase epsilon chain, chloroplastic from Staurastrum punctulatum (Green alga).